The primary structure comprises 1079 residues: Isoleucine--tRNA ligase (1079 aa).

Positions 53 to 63 (PFANGLPHYGH) match the 'HIGH' region motif. Positions 611–615 (KLSKR) match the 'KMSKS' region motif. ATP is bound at residue Lys614.

Belongs to the class-I aminoacyl-tRNA synthetase family. IleS type 2 subfamily. In terms of assembly, monomer. Requires Zn(2+) as cofactor.

It is found in the cytoplasm. It carries out the reaction tRNA(Ile) + L-isoleucine + ATP = L-isoleucyl-tRNA(Ile) + AMP + diphosphate. Functionally, catalyzes the attachment of isoleucine to tRNA(Ile). As IleRS can inadvertently accommodate and process structurally similar amino acids such as valine, to avoid such errors it has two additional distinct tRNA(Ile)-dependent editing activities. One activity is designated as 'pretransfer' editing and involves the hydrolysis of activated Val-AMP. The other activity is designated 'posttransfer' editing and involves deacylation of mischarged Val-tRNA(Ile). This Rickettsia canadensis (strain McKiel) protein is Isoleucine--tRNA ligase.